Here is a 113-residue protein sequence, read N- to C-terminus: Con-Ins G3 (113 aa).

A signal peptide spans 1-21 (MTTSFYFLLVALGLLLYVCQS). The propeptide occupies 22–29 (SFGNQHTR). P34 carries the 4-hydroxyproline; partial modification. 3 disulfides stabilise this stretch: C38/C99, C50/C112, and C98/C103. E41 is modified (4-carboxyglutamate). Position 51 is a histidine amide (H51). Residues 52–92 (GKRNDAGKKRGRASPLWQRQGFLSMLKAKRNEAFFLQRDGR) constitute a propeptide, c peptide. Position 96 is a 4-carboxyglutamate (E96). P102 is modified (4-hydroxyproline; partial).

It belongs to the insulin family. Heterodimer of A and B chains; disulfide-linked. It is noteworthy that in this dimer, in contrast to Con-Ins G1, the chain B is amidated and not the chain A. Expressed by the venom gland.

The protein resides in the secreted. Its function is as follows. This venom insulin, from a fish-hunting cone snail, facilitates prey capture by rapidly inducing hypoglycemic shock. It is one of the smallest known insulin found in nature and lacks the C-terminal segment of the B chain that, in human insulin, mediates engagement of the insulin receptor (INSR) and assembly of the hormone's hexameric storage form. Despite lacking this segment, it both binds and activates human insulin receptor (long isoform (HIR-B)) with a high potency (EC(50)=242 nM). In vivo, intraperitoneal injection of this peptide into zebrafish lowers blood glucose with a lower potency than human insulin. In addition, when applied to water, this peptide reduces overall locomotor activity of zebrafish larvae, observed as a significant decrease in the percentage of time spent swimming and movement frequency. When tested on a mouse model of diabetes, this insulin also lowers blood glucose with a 10-fold lower potency than human insulin. In Conus geographus (Geography cone), this protein is Con-Ins G3.